Consider the following 552-residue polypeptide: Urocanate hydratase (552 aa).

NAD(+)-binding positions include 49-50 (GG), Q127, 173-175 (GMG), D193, 239-240 (NA), 260-264 (QTSAH), 270-271 (YI), and Y319. C407 is a catalytic residue. G489 is an NAD(+) binding site.

It belongs to the urocanase family. It depends on NAD(+) as a cofactor.

The protein resides in the cytoplasm. The enzyme catalyses 4-imidazolone-5-propanoate = trans-urocanate + H2O. It participates in amino-acid degradation; L-histidine degradation into L-glutamate; N-formimidoyl-L-glutamate from L-histidine: step 2/3. Its function is as follows. Catalyzes the conversion of urocanate to 4-imidazolone-5-propionate. The protein is Urocanate hydratase of Bacillus cereus (strain ATCC 10987 / NRS 248).